Here is a 36-residue protein sequence, read N- to C-terminus: Potassium channel toxin alpha-KTx 16.1 (36 aa).

Intrachain disulfides connect C7–C28, C13–C33, and C17–C35.

It belongs to the short scorpion toxin superfamily. Potassium channel inhibitor family. Alpha-KTx 16 subfamily. As to expression, expressed by the venom gland.

The protein resides in the secreted. Blocks calcium-activated potassium channels. This Hottentotta tamulus (Eastern Indian scorpion) protein is Potassium channel toxin alpha-KTx 16.1.